Reading from the N-terminus, the 112-residue chain is Cytochrome c type-1 (112 aa).

Residues cysteine 20, cysteine 23, histidine 24, and methionine 85 each coordinate heme c.

Binds 1 heme c group covalently per subunit.

The protein localises to the mitochondrion intermembrane space. Its function is as follows. Electron carrier between complex III (ubiquinol-cytochrome c oxireductase) and complex IV (cytochrome c oxidase). This Ascaris suum (Pig roundworm) protein is Cytochrome c type-1.